A 588-amino-acid polypeptide reads, in one-letter code: MINKNEQTESTSGAAEQKEDDEEQYVQLSSLGEYKDEVTPLLSPKHVPLVLGKVTKEAAIATHSALHGGMSEEKERQIRDIYDRLDIDNDGTIDIRDLTLALKHETPHIPANLAPVIMSKMSPDDEGRVDFYSFSSYVLENEQKLAEMFADMDRNHDGLVDVVEMKNYCKDIGVPLDDHKAQHIVNKMDQTGSASVDLKEFQEFMMLYPSSDLKDIVDFWRHNLIIDIGEDSQIPEDFSQQEMQEGIWWRHLVAGGAAGAVSRTCTAPFDRIKVYLQVNSSKTNRLGVMSCLKLLHAEGGIKSFWRGNGINVIKIAPESAIKFMCYDQLKRLIQKKKGNEEISTFERLCAGSAAGAISQSTIYPMEVMKTRLALRKTGQLDRGIIHFAHKMYTKEGIRCFYKGYLPNLIGIIPYAGIDLAIYETLKRTYVRYYETNSSEPGVLALLACGTCSSTCGQLSSYPFALVRTRLQALSITRYSPQPDTMFGQFKYILQNEGVTGFYRGITPNFLKVIPAVSISYVVYEKVRTGLGVPVCSRGGLEDIHQFLPCSIHSIIQFFFFPRTFLLTISGRSLRVKPVWRSHFSKFNK.

The span at 1–14 (MINKNEQTESTSGA) shows a compositional bias: polar residues. The disordered stretch occupies residues 1-25 (MINKNEQTESTSGAAEQKEDDEEQY). EF-hand domains lie at 73–108 (EKER…ETPH), 109–139 (IPAN…SYVL), 140–175 (ENEQ…IGVP), and 176–211 (LDDH…YPSS). The Ca(2+) site is built by aspartate 86, aspartate 88, aspartate 90, threonine 92, and aspartate 97. Residues aspartate 153, asparagine 155, aspartate 157, and glutamate 164 each contribute to the Ca(2+) site. 3 Solcar repeats span residues 246-332 (GIWW…LKRL), 342-428 (ISTF…LKRT), and 440-529 (PGVL…VRTG). Helical transmembrane passes span 252–269 (LVAG…TAPF), 307–326 (GNGI…FMCY), 352–365 (SAAG…IYPM), 403–422 (GYLP…LAIY), 446–463 (LACG…SYPF), and 504–523 (GITP…YVVY).

It belongs to the mitochondrial carrier (TC 2.A.29) family. As to quaternary structure, homodimer (via N-terminus).

Its subcellular location is the mitochondrion inner membrane. Functionally, mitochondrial and calcium-binding carrier that catalyzes the calcium-dependent exchange of cytoplasmic glutamate with mitochondrial aspartate across the mitochondrial inner membrane. The polypeptide is Putative calcium-binding mitochondrial carrier F55A11.4 (Caenorhabditis elegans).